We begin with the raw amino-acid sequence, 201 residues long: MELTLKDAKGALEVSEATFGREFNEALVHQVVVAYAAGARQGTKAQKTRSEVAGGGKKPWRQKGTGRARAGTIRSPIWRSGGATFAAKPQNHSQKVNKKMYRGAIKSILSELIRQERLIVVEKFGVDEPKTKQLAAKLKEMDLNDVLIVTKEVDENLFLASRNLHKVDVRDVQGIDPVSLIAFEKVLMTADAVKQLEEVLS.

A disordered region spans residues 43 to 69 (TKAQKTRSEVAGGGKKPWRQKGTGRAR).

It belongs to the universal ribosomal protein uL4 family. As to quaternary structure, part of the 50S ribosomal subunit.

In terms of biological role, one of the primary rRNA binding proteins, this protein initially binds near the 5'-end of the 23S rRNA. It is important during the early stages of 50S assembly. It makes multiple contacts with different domains of the 23S rRNA in the assembled 50S subunit and ribosome. Functionally, forms part of the polypeptide exit tunnel. This Idiomarina loihiensis (strain ATCC BAA-735 / DSM 15497 / L2-TR) protein is Large ribosomal subunit protein uL4.